The following is a 335-amino-acid chain: Pyridoxal 5'-phosphate synthase subunit PdxS (335 aa).

D59 contributes to the D-ribose 5-phosphate binding site. K116 acts as the Schiff-base intermediate with D-ribose 5-phosphate in catalysis. G188 contributes to the D-ribose 5-phosphate binding site. K200 is a binding site for D-glyceraldehyde 3-phosphate. Residues G253 and 274 to 275 (GS) each bind D-ribose 5-phosphate.

It belongs to the PdxS/SNZ family. As to quaternary structure, in the presence of PdxT, forms a dodecamer of heterodimers.

The enzyme catalyses aldehydo-D-ribose 5-phosphate + D-glyceraldehyde 3-phosphate + L-glutamine = pyridoxal 5'-phosphate + L-glutamate + phosphate + 3 H2O + H(+). The protein operates within cofactor biosynthesis; pyridoxal 5'-phosphate biosynthesis. Functionally, catalyzes the formation of pyridoxal 5'-phosphate from ribose 5-phosphate (RBP), glyceraldehyde 3-phosphate (G3P) and ammonia. The ammonia is provided by the PdxT subunit. Can also use ribulose 5-phosphate and dihydroxyacetone phosphate as substrates, resulting from enzyme-catalyzed isomerization of RBP and G3P, respectively. The sequence is that of Pyridoxal 5'-phosphate synthase subunit PdxS from Hyperthermus butylicus (strain DSM 5456 / JCM 9403 / PLM1-5).